The chain runs to 327 residues: Zinc transport protein ZntB (327 aa).

At M1 to S271 the chain is on the cytoplasmic side. The helical transmembrane segment at L272–G292 threads the bilayer. Over G293–S300 the chain is Periplasmic. A helical transmembrane segment spans residues F301–L321. Residues K322–L327 are Cytoplasmic-facing.

The protein belongs to the CorA metal ion transporter (MIT) (TC 1.A.35) family.

The protein resides in the cell inner membrane. It carries out the reaction Zn(2+)(out) + H(+)(out) = Zn(2+)(in) + H(+)(in). Functionally, zinc transporter. Acts as a Zn(2+):proton symporter, which likely mediates zinc ion uptake. The polypeptide is Zinc transport protein ZntB (Yersinia enterocolitica serotype O:8 / biotype 1B (strain NCTC 13174 / 8081)).